We begin with the raw amino-acid sequence, 120 residues long: Spermidine export protein MdtJ (120 aa).

The next 4 helical transmembrane spans lie at 1 to 21 (MFYW…TLSM), 31 to 51 (AGFI…SFAV), 54 to 74 (IALG…ITIF), and 81 to 101 (EALS…IVLI).

It belongs to the drug/metabolite transporter (DMT) superfamily. Small multidrug resistance (SMR) (TC 2.A.7.1) family. MdtJ subfamily. As to quaternary structure, forms a complex with MdtI.

It localises to the cell inner membrane. Catalyzes the excretion of spermidine. The sequence is that of Spermidine export protein MdtJ from Salmonella paratyphi A (strain ATCC 9150 / SARB42).